A 341-amino-acid polypeptide reads, in one-letter code: DNA-directed RNA polymerase subunit alpha (341 aa).

The tract at residues 1 to 223 (MEQKRPQLKA…DELSVFGNVE (223 aa)) is alpha N-terminal domain (alpha-NTD). Residues 268-341 (PQPFPTDQDT…LAQFGLALRD (74 aa)) form an alpha C-terminal domain (alpha-CTD) region.

It belongs to the RNA polymerase alpha chain family. In terms of assembly, homodimer. The RNAP catalytic core consists of 2 alpha, 1 beta, 1 beta' and 1 omega subunit. When a sigma factor is associated with the core the holoenzyme is formed, which can initiate transcription.

The enzyme catalyses RNA(n) + a ribonucleoside 5'-triphosphate = RNA(n+1) + diphosphate. In terms of biological role, DNA-dependent RNA polymerase catalyzes the transcription of DNA into RNA using the four ribonucleoside triphosphates as substrates. This Deinococcus radiodurans (strain ATCC 13939 / DSM 20539 / JCM 16871 / CCUG 27074 / LMG 4051 / NBRC 15346 / NCIMB 9279 / VKM B-1422 / R1) protein is DNA-directed RNA polymerase subunit alpha.